A 134-amino-acid chain; its full sequence is Phosphoribosyl-AMP cyclohydrolase (134 aa).

Residue Asp80 participates in Mg(2+) binding. Cys81 contacts Zn(2+). Positions 82 and 84 each coordinate Mg(2+). Zn(2+) is bound by residues Cys98 and Cys105.

This sequence belongs to the PRA-CH family. Homodimer. The cofactor is Mg(2+). Requires Zn(2+) as cofactor.

The protein localises to the cytoplasm. The catalysed reaction is 1-(5-phospho-beta-D-ribosyl)-5'-AMP + H2O = 1-(5-phospho-beta-D-ribosyl)-5-[(5-phospho-beta-D-ribosylamino)methylideneamino]imidazole-4-carboxamide. It functions in the pathway amino-acid biosynthesis; L-histidine biosynthesis; L-histidine from 5-phospho-alpha-D-ribose 1-diphosphate: step 3/9. Catalyzes the hydrolysis of the adenine ring of phosphoribosyl-AMP. The protein is Phosphoribosyl-AMP cyclohydrolase of Bordetella petrii (strain ATCC BAA-461 / DSM 12804 / CCUG 43448).